We begin with the raw amino-acid sequence, 201 residues long: Ribosomal RNA small subunit methyltransferase G (201 aa).

S-adenosyl-L-methionine contacts are provided by residues Gly71, Phe76, 120–121 (LE), and Arg134.

The protein belongs to the methyltransferase superfamily. RNA methyltransferase RsmG family.

The protein resides in the cytoplasm. The enzyme catalyses guanosine(527) in 16S rRNA + S-adenosyl-L-methionine = N(7)-methylguanosine(527) in 16S rRNA + S-adenosyl-L-homocysteine. Functionally, specifically methylates the N7 position of guanine in position 527 of 16S rRNA. The sequence is that of Ribosomal RNA small subunit methyltransferase G from Rhodospirillum rubrum (strain ATCC 11170 / ATH 1.1.1 / DSM 467 / LMG 4362 / NCIMB 8255 / S1).